The following is a 466-amino-acid chain: MSTKNVRTEKDTFGPIDVPADRLWGAQTQRSLQNFAISTERMPLALIRALVLVKKAAARVNVENGSLAKEKGEAIIRAADEVLAGQHDAEFPLSVWQTGSGTQTNMNTNEVLANRASELLGGERGERRKVHPNDDVNKGQSSNDVFPTAMSVAAVAAITEHVLPELKALRDVLAQKARAFHDVVKVGRTHLQDATPLTLGQEVGGFVAQLDHAKGHLERTLPHLLELALGGTAVGTGLNAPKGYAERVAQELAQLTGHPFVTAPNKFEALAANDALVQAHGALKGLAAVLFKVANDVRWLSSGPRSGLAEITIPENEPGSSIMPGKVNPTQSEALTMLCAQVMGNDVAVTVGGASGNFQLNVFKPLIAHNLLQSCRLLADGMRSFRLHCAVGIEPNRPRIQENLERSLMLVTALNPHIGYDNAAKIAKTAHRDGTTLKETAVALGLVTPEQFDQWVRPEDMTGHKG.

Substrate-binding positions include 100-102 (SGT), arginine 128, 131-134 (HPND), 141-143 (SSN), and threonine 189. Residues 122 to 137 (GERGERRKVHPNDDVN) show a composition bias toward basic and acidic residues. Residues 122–143 (GERGERRKVHPNDDVNKGQSSN) are disordered. Histidine 190 functions as the Proton donor/acceptor in the catalytic mechanism. Serine 320 is a catalytic residue. Residues serine 321 and 326 to 328 (KVN) each bind substrate.

This sequence belongs to the class-II fumarase/aspartase family. Fumarase subfamily. Homotetramer.

The protein resides in the cytoplasm. The catalysed reaction is (S)-malate = fumarate + H2O. The protein operates within carbohydrate metabolism; tricarboxylic acid cycle; (S)-malate from fumarate: step 1/1. Involved in the TCA cycle. Catalyzes the stereospecific interconversion of fumarate to L-malate. This is Fumarate hydratase class II from Myxococcus xanthus (strain DK1622).